The chain runs to 280 residues: Bifunctional protein FolD (280 aa).

NADP(+)-binding positions include 159–161, serine 184, and isoleucine 225; that span reads GRS.

The protein belongs to the tetrahydrofolate dehydrogenase/cyclohydrolase family. As to quaternary structure, homodimer.

The enzyme catalyses (6R)-5,10-methylene-5,6,7,8-tetrahydrofolate + NADP(+) = (6R)-5,10-methenyltetrahydrofolate + NADPH. It carries out the reaction (6R)-5,10-methenyltetrahydrofolate + H2O = (6R)-10-formyltetrahydrofolate + H(+). It participates in one-carbon metabolism; tetrahydrofolate interconversion. Catalyzes the oxidation of 5,10-methylenetetrahydrofolate to 5,10-methenyltetrahydrofolate and then the hydrolysis of 5,10-methenyltetrahydrofolate to 10-formyltetrahydrofolate. The protein is Bifunctional protein FolD of Methanosphaerula palustris (strain ATCC BAA-1556 / DSM 19958 / E1-9c).